The sequence spans 123 residues: MPTINQLIRKGREKKVRKSTAPALKCNPQKRGVCTRVYTTTPKKPNSALRKVARVRLTNGIVVTSYIPGVGHNLQEHSVVLIRGGRVKDLPGVRYHIVRGALDLAGVKDRKQGRSKYGAKRPK.

D89 carries the post-translational modification 3-methylthioaspartic acid.

This sequence belongs to the universal ribosomal protein uS12 family. Part of the 30S ribosomal subunit. Contacts proteins S8 and S17. May interact with IF1 in the 30S initiation complex.

In terms of biological role, with S4 and S5 plays an important role in translational accuracy. Interacts with and stabilizes bases of the 16S rRNA that are involved in tRNA selection in the A site and with the mRNA backbone. Located at the interface of the 30S and 50S subunits, it traverses the body of the 30S subunit contacting proteins on the other side and probably holding the rRNA structure together. The combined cluster of proteins S8, S12 and S17 appears to hold together the shoulder and platform of the 30S subunit. This chain is Small ribosomal subunit protein uS12, found in Syntrophotalea carbinolica (strain DSM 2380 / NBRC 103641 / GraBd1) (Pelobacter carbinolicus).